The sequence spans 166 residues: Probable calcium-binding protein CML17 (166 aa).

EF-hand domains follow at residues 12-47 (EQIN…LGVK), 48-83 (PSPD…ELLS), 91-126 (YTEE…LGHA), and 127-162 (LTVA…AAFD). Aspartate 25, asparagine 27, aspartate 29, serine 31, and glutamate 36 together coordinate Ca(2+). Residues aspartate 104, aspartate 106, asparagine 108, glutamate 115, aspartate 140, aspartate 142, aspartate 144, arginine 146, and glutamate 151 each contribute to the Ca(2+) site.

Its function is as follows. Potential calcium sensor. The protein is Probable calcium-binding protein CML17 (CML17) of Arabidopsis thaliana (Mouse-ear cress).